Consider the following 483-residue polypeptide: NAD-dependent protein deacetylase SRT1 (483 aa).

Residues 27–270 form the Deacetylase sirtuin-type domain; it reads PELLHKKIEE…MYMMNLRIPP (244 aa). Residues 53 to 57, 63 to 65, and 114 to 117 each bind NAD(+); these read AGIST, DFR, and QNVD. Histidine 134 serves as the catalytic Proton acceptor. Zn(2+) contacts are provided by cysteine 142, cysteine 145, cysteine 167, and cysteine 172. Residues 209–211 and 235–237 contribute to the NAD(+) site; these read GTS and NLQ.

This sequence belongs to the sirtuin family. Class IV subfamily. The cofactor is Zn(2+).

It is found in the nucleus. The catalysed reaction is N(6)-acetyl-L-lysyl-[protein] + NAD(+) + H2O = 2''-O-acetyl-ADP-D-ribose + nicotinamide + L-lysyl-[protein]. NAD-dependent protein deacetylase. Has deacetylase activity towards H3K9Ac. May have a function in the safeguard against genome instability and DNA damage to ensure plant cell growth. May negatively regulate metabolic signal transduction involving methanol and jasmonates during leaf senescence. Required for histone H3K9Ac deacetylation and repression of AP2-1/RSR1 and amylase genes during early seed development. Functions as an epigenetic regulator to repress the expression of glycolytic genes and glycolysis in seedlings. Reduces lysine acetylation of the glycolytic glyceraldehyde-3-phosphate dehydrogenase (GAPDH), which is found to also function as an activator of glycolytic gene expression. The chain is NAD-dependent protein deacetylase SRT1 from Oryza sativa subsp. indica (Rice).